Here is a 314-residue protein sequence, read N- to C-terminus: tRNA dimethylallyltransferase (314 aa).

16–23 (GPTGVGKT) provides a ligand contact to ATP. 18-23 (TGVGKT) serves as a coordination point for substrate. An interaction with substrate tRNA region spans residues 41–44 (DSMQ).

Belongs to the IPP transferase family. In terms of assembly, monomer. It depends on Mg(2+) as a cofactor.

It catalyses the reaction adenosine(37) in tRNA + dimethylallyl diphosphate = N(6)-dimethylallyladenosine(37) in tRNA + diphosphate. Catalyzes the transfer of a dimethylallyl group onto the adenine at position 37 in tRNAs that read codons beginning with uridine, leading to the formation of N6-(dimethylallyl)adenosine (i(6)A). The sequence is that of tRNA dimethylallyltransferase from Desulfosudis oleivorans (strain DSM 6200 / JCM 39069 / Hxd3) (Desulfococcus oleovorans).